The chain runs to 268 residues: Phosphatidylglycerol--prolipoprotein diacylglyceryl transferase (268 aa).

A run of 4 helical transmembrane segments spans residues 23–43 (WYAL…LALA), 58–78 (FLTW…VLFY), 96–116 (GGMS…LFCW), and 119–139 (GLSP…GLFF). Arg-141 provides a ligand contact to a 1,2-diacyl-sn-glycero-3-phospho-(1'-sn-glycerol). 3 helical membrane passes run 181 to 201 (SFLE…MPAV), 206 to 226 (GMTA…AEFF), and 238 to 258 (AGAT…VWLV).

This sequence belongs to the Lgt family.

It localises to the cell inner membrane. The enzyme catalyses L-cysteinyl-[prolipoprotein] + a 1,2-diacyl-sn-glycero-3-phospho-(1'-sn-glycerol) = an S-1,2-diacyl-sn-glyceryl-L-cysteinyl-[prolipoprotein] + sn-glycerol 1-phosphate + H(+). The protein operates within protein modification; lipoprotein biosynthesis (diacylglyceryl transfer). Functionally, catalyzes the transfer of the diacylglyceryl group from phosphatidylglycerol to the sulfhydryl group of the N-terminal cysteine of a prolipoprotein, the first step in the formation of mature lipoproteins. This is Phosphatidylglycerol--prolipoprotein diacylglyceryl transferase from Azospirillum brasilense.